The primary structure comprises 127 residues: Thioredoxin domain-containing protein 8 (127 aa).

One can recognise a Thioredoxin domain in the interval 2 to 127 (VQKIKSMREF…KLEEKIQELM (126 aa)). A disulfide bridge connects residues Cys32 and Cys35.

It belongs to the thioredoxin family. In terms of tissue distribution, testis-specific. Expressed in spermatozoa, sperm tail, elongated and round spermatids.

The protein localises to the cytoplasm. It is found in the golgi apparatus. Its function is as follows. May be required for post-translational modifications of proteins required for acrosomal biogenesis. May act by reducing disulfide bonds within the sperm. The chain is Thioredoxin domain-containing protein 8 (Txndc8) from Rattus norvegicus (Rat).